We begin with the raw amino-acid sequence, 767 residues long: Protein transport protein Sec23B (767 aa).

Ala2 bears the N-acetylalanine mark. Zn(2+) is bound by residues Cys61, Cys66, Cys85, and Cys88. Position 564 is an N6-acetyllysine (Lys564). The stretch at Pro634–Leu720 is one Gelsolin-like repeat.

The protein belongs to the SEC23/SEC24 family. SEC23 subfamily. In terms of assembly, COPII is composed of at least five proteins: the Sec23/24 complex, the Sec13/31 complex and Sar1. Interacts with SAR1A. Ubiquitously expressed.

It is found in the cytoplasmic vesicle. The protein resides in the COPII-coated vesicle membrane. The protein localises to the endoplasmic reticulum membrane. Its subcellular location is the cytoplasm. It localises to the cytosol. Component of the coat protein complex II (COPII) which promotes the formation of transport vesicles from the endoplasmic reticulum (ER). The coat has two main functions, the physical deformation of the endoplasmic reticulum membrane into vesicles and the selection of cargo molecules for their transport to the Golgi complex. This chain is Protein transport protein Sec23B, found in Homo sapiens (Human).